The following is a 129-amino-acid chain: uncharacterized protein (129 aa).

Disordered regions lie at residues 1 to 57 (MGGG…LPNH) and 87 to 129 (PVSS…WLWW). A compositionally biased stretch (basic and acidic residues) spans 10-20 (SGEERREKRSG). Residues 87 to 99 (PVSSSPSRSPSSS) show a composition bias toward low complexity.

This is an uncharacterized protein from Homo sapiens (Human).